The following is a 258-amino-acid chain: Acetylglutamate kinase (258 aa).

Residues 44-45, arginine 66, and asparagine 158 each bind substrate; that span reads GG. ATP is bound by residues 181–186 and 209–211; these read DISSIL and IIT.

Belongs to the acetylglutamate kinase family. ArgB subfamily. In terms of assembly, homodimer.

The protein localises to the cytoplasm. The catalysed reaction is N-acetyl-L-glutamate + ATP = N-acetyl-L-glutamyl 5-phosphate + ADP. It functions in the pathway amino-acid biosynthesis; L-arginine biosynthesis; N(2)-acetyl-L-ornithine from L-glutamate: step 2/4. Functionally, catalyzes the ATP-dependent phosphorylation of N-acetyl-L-glutamate. The chain is Acetylglutamate kinase from Buchnera aphidicola subsp. Schizaphis graminum (strain Sg).